A 377-amino-acid polypeptide reads, in one-letter code: tRNA(Met) cytidine acetate ligase (377 aa).

ATP-binding positions include 7 to 20, Gly101, Asn151, and Arg176; that span reads VVEYNPFHNGHRYH.

Belongs to the TmcAL family.

It is found in the cytoplasm. The catalysed reaction is cytidine(34) in elongator tRNA(Met) + acetate + ATP = N(4)-acetylcytidine(34) in elongator tRNA(Met) + AMP + diphosphate. Functionally, catalyzes the formation of N(4)-acetylcytidine (ac(4)C) at the wobble position of elongator tRNA(Met), using acetate and ATP as substrates. First activates an acetate ion to form acetyladenylate (Ac-AMP) and then transfers the acetyl group to tRNA to form ac(4)C34. This Limosilactobacillus reuteri (strain DSM 20016) (Lactobacillus reuteri) protein is tRNA(Met) cytidine acetate ligase.